Here is a 223-residue protein sequence, read N- to C-terminus: 7-cyano-7-deazaguanine synthase (223 aa).

Position 11–21 (11–21 (ISGGMDSALAA)) interacts with ATP. The Zn(2+) site is built by C189, C197, C200, and C203.

This sequence belongs to the QueC family. Zn(2+) is required as a cofactor.

The enzyme catalyses 7-carboxy-7-deazaguanine + NH4(+) + ATP = 7-cyano-7-deazaguanine + ADP + phosphate + H2O + H(+). It functions in the pathway purine metabolism; 7-cyano-7-deazaguanine biosynthesis. Its function is as follows. Catalyzes the ATP-dependent conversion of 7-carboxy-7-deazaguanine (CDG) to 7-cyano-7-deazaguanine (preQ(0)). The sequence is that of 7-cyano-7-deazaguanine synthase from Campylobacter fetus subsp. fetus (strain 82-40).